Reading from the N-terminus, the 230-residue chain is Ribulose-phosphate 3-epimerase (230 aa).

Residue serine 10 coordinates substrate. Histidine 35, aspartate 37, and histidine 68 together coordinate a divalent metal cation. The active-site Proton acceptor is the aspartate 37. Residues histidine 68, 146–149 (GFGG), 179–181 (DGG), and 201–202 (GS) each bind substrate. Residue aspartate 179 participates in a divalent metal cation binding. Aspartate 179 (proton donor) is an active-site residue.

This sequence belongs to the ribulose-phosphate 3-epimerase family. Homohexamer. A divalent metal cation serves as cofactor.

It catalyses the reaction D-ribulose 5-phosphate = D-xylulose 5-phosphate. Its pathway is carbohydrate degradation. Its function is as follows. Catalyzes the reversible epimerization of D-ribulose 5-phosphate to D-xylulose 5-phosphate. In Synechocystis sp. (strain ATCC 27184 / PCC 6803 / Kazusa), this protein is Ribulose-phosphate 3-epimerase.